The sequence spans 191 residues: Adenylate kinase (191 aa).

12–17 contributes to the ATP binding site; it reads GSGKTT. Residues 34–63 form an NMP region; sequence STGDLLRAESAKKTERGLLIEKFTSQGELV. Residues Thr35, Arg40, 61–63, 88–91, and Gln95 each bind AMP; these read ELV and GYPR. The LID stretch occupies residues 130-136; sequence GRSRGAD. Arg131 contributes to the ATP binding site. AMP contacts are provided by Arg133 and Arg145. Arg173 contributes to the ATP binding site.

Belongs to the adenylate kinase family. In terms of assembly, monomer.

The protein resides in the cytoplasm. The catalysed reaction is AMP + ATP = 2 ADP. It functions in the pathway purine metabolism; AMP biosynthesis via salvage pathway; AMP from ADP: step 1/1. Functionally, catalyzes the reversible transfer of the terminal phosphate group between ATP and AMP. Plays an important role in cellular energy homeostasis and in adenine nucleotide metabolism. This is Adenylate kinase from Helicobacter pylori (strain Shi470).